The chain runs to 146 residues: Leghemoglobin Lb120-34 (146 aa).

The region spanning 2 to 146 (GFTEKQEALV…LASAIKKAMN (145 aa)) is the Globin domain. Tyr-24 and Tyr-29 each carry nitrated tyrosine. Ser-44 serves as a coordination point for heme b. Residue Ser-44 is modified to Phosphoserine. His-61 serves as a coordination point for O2. Lys-64, His-93, and Lys-96 together coordinate heme b. A Nitrated tyrosine modification is found at Tyr-134.

It belongs to the plant globin family. In terms of assembly, monomer. Post-translationally, nitrated in effective nodules and particularly in hypoxic conditions; this mechanism may play a protective role in the symbiosis by buffering toxic peroxynitrite NO(2)(-). Nitration level decrease during nodule senescence. Phosphorylation at Ser-44 disrupts the molecular environment of its porphyrin ring oxygen binding pocket, thus leading to a reduced oxygen consumption and to the delivery of oxygen O(2) to symbiosomes. Root nodules.

It localises to the cytoplasm. The protein localises to the cytosol. The protein resides in the nucleus. Its function is as follows. Leghemoglobin that reversibly binds oxygen O(2) through a pentacoordinated heme iron. In root nodules, facilitates the diffusion of oxygen to the bacteroids while preventing the bacterial nitrogenase from being inactivated by buffering dioxygen, nitric oxide and carbon monoxide, and promoting the formation of reactive oxygen species (ROS, e.g. H(2)O(2)). This role is essential for symbiotic nitrogen fixation (SNF). The polypeptide is Leghemoglobin Lb120-34 (Pisum sativum (Garden pea)).